The chain runs to 309 residues: Porphobilinogen deaminase (309 aa).

C241 bears the S-(dipyrrolylmethanemethyl)cysteine mark.

Belongs to the HMBS family. Monomer. Requires dipyrromethane as cofactor.

The enzyme catalyses 4 porphobilinogen + H2O = hydroxymethylbilane + 4 NH4(+). It participates in porphyrin-containing compound metabolism; protoporphyrin-IX biosynthesis; coproporphyrinogen-III from 5-aminolevulinate: step 2/4. Its function is as follows. Tetrapolymerization of the monopyrrole PBG into the hydroxymethylbilane pre-uroporphyrinogen in several discrete steps. In Bacillus cereus (strain ATCC 10987 / NRS 248), this protein is Porphobilinogen deaminase.